The primary structure comprises 546 residues: ATP-dependent rRNA helicase RRP3 (546 aa).

The interval 1-108 (MSDFKRRKLE…DEEAEAQAAA (108 aa)) is disordered. Acidic residues-rich tracts occupy residues 60–77 (SEED…EEED) and 94–103 (EAEQSDEEAE). The Q motif motif lies at 115-143 (KTFADLGVREELCDACENLGYKTATPIQT). The Helicase ATP-binding domain maps to 146–318 (IPLALAGKDI…RAALKNPVRV (173 aa)). 159–166 (AETGSGKT) is a binding site for ATP. A DEAD box motif is present at residues 265–268 (DEAD). Residues 342-490 (YKDLYLIHLL…EEKVSRDEVM (149 aa)) form the Helicase C-terminal domain. Residues 504 to 515 (VREMKDLHDQRK) show a composition bias toward basic and acidic residues. A disordered region spans residues 504 to 546 (VREMKDLHDQRKSGRGGRGGGRGGGRGGRGRGGRRDNMDMDEG). Gly residues predominate over residues 519–530 (GGRGGGRGGGRG). Over residues 536–546 (GRRDNMDMDEG) the composition is skewed to basic and acidic residues.

The protein belongs to the DEAD box helicase family. DDX47/RRP3 subfamily. As to quaternary structure, interacts with the SSU processome.

The protein localises to the nucleus. The catalysed reaction is ATP + H2O = ADP + phosphate + H(+). Functionally, ATP-dependent rRNA helicase required for pre-ribosomal RNA processing. Involved in the maturation of the 35S-pre-rRNA and to its cleavage to mature 18S rRNA. This Phaeosphaeria nodorum (strain SN15 / ATCC MYA-4574 / FGSC 10173) (Glume blotch fungus) protein is ATP-dependent rRNA helicase RRP3.